We begin with the raw amino-acid sequence, 192 residues long: UPF0301 protein Bcen_0382 (192 aa).

This sequence belongs to the UPF0301 (AlgH) family.

The sequence is that of UPF0301 protein Bcen_0382 from Burkholderia orbicola (strain AU 1054).